The following is a 352-amino-acid chain: Nicotinate-nucleotide--dimethylbenzimidazole phosphoribosyltransferase (352 aa).

Glutamate 318 (proton acceptor) is an active-site residue.

This sequence belongs to the CobT family.

The enzyme catalyses 5,6-dimethylbenzimidazole + nicotinate beta-D-ribonucleotide = alpha-ribazole 5'-phosphate + nicotinate + H(+). It participates in nucleoside biosynthesis; alpha-ribazole biosynthesis; alpha-ribazole from 5,6-dimethylbenzimidazole: step 1/2. In terms of biological role, catalyzes the synthesis of alpha-ribazole-5'-phosphate from nicotinate mononucleotide (NAMN) and 5,6-dimethylbenzimidazole (DMB). This chain is Nicotinate-nucleotide--dimethylbenzimidazole phosphoribosyltransferase, found in Dehalococcoides mccartyi (strain ATCC BAA-2100 / JCM 16839 / KCTC 5957 / BAV1).